The sequence spans 328 residues: Malate dehydrogenase (328 aa).

12-18 (GAAGQIG) contributes to the NAD(+) binding site. Substrate-binding residues include R95 and R101. Residues N108, Q115, and 132-134 (VGN) contribute to the NAD(+) site. Substrate-binding residues include N134 and R165. Residue H190 is the Proton acceptor of the active site.

The protein belongs to the LDH/MDH superfamily. MDH type 2 family.

It catalyses the reaction (S)-malate + NAD(+) = oxaloacetate + NADH + H(+). Catalyzes the reversible oxidation of malate to oxaloacetate. This Delftia acidovorans (strain DSM 14801 / SPH-1) protein is Malate dehydrogenase.